Here is a 55-residue protein sequence, read N- to C-terminus: AYKITDGCINCGACEPECPVEAISESDAVRVIDADKCIDCGACANTCPVDAIVEG.

4Fe-4S ferredoxin-type domains follow at residues 2-27 (YKIT…SESD) and 28-55 (AVRV…IVEG). Residues Cys8, Cys11, Cys14, Cys18, Cys37, Cys40, Cys43, and Cys47 each contribute to the [4Fe-4S] cluster site.

It depends on [4Fe-4S] cluster as a cofactor.

In terms of biological role, ferredoxins are iron-sulfur proteins that transfer electrons in a wide variety of metabolic reactions. This chain is Ferredoxin, found in Clostridium sp. (strain M-E).